The following is a 99-amino-acid chain: UPF0213 protein SP_1535 (99 aa).

A GIY-YIG domain is found at 3 to 78 (HKAYMYVLEC…KRKKRPQKEE (76 aa)).

This sequence belongs to the UPF0213 family.

The protein is UPF0213 protein SP_1535 of Streptococcus pneumoniae serotype 4 (strain ATCC BAA-334 / TIGR4).